The primary structure comprises 551 residues: MPPNLTPRSFNRDDGVTEEYINGLPAYPTPPTTLANEEQARPRTFDDFGLEEGLVKSLKGLYGEDGKTTPIETLSFHHFTQPDIASAPIGSQRVLLGAETGSGKTVSYLIPLFHHLKRTDPGPSVTSSFFADSENTLHPRSIILSPTHELTRQSTQFAKILTHNTKLSVHGMSSTVSGGVGEKRGSVDVLLGTVGSLRRMFGMTRSEEEQEKEDYIRGKRIWQDEQEKGMVEGDKVEWVVIDEADVLLGREFYLDTISVLSQVKQANLILCTATLPPFLINLLTTNPFFTKKEPFIHLLSPGLHKLPPKLLTRFIRPSTTGNKHGDVAHQVRLTLAEDAKAAKAEGREGEEPSKIVIFCNSDKQVEQVSGILGTKKIDCLAWTGAGEERLRGRNGSLNDFLQRPHLPGHEPPAPLPSLEPRETKPIFQDKNGTTPNVSQVTRRRVLVTTSLLSRGLDFHPSVSSVFLVQPPRDVLDFVHRAGRAGRAGRPGRVVVFGIDEGGTLGEGAKNNKGGKGQGPLKKDGKTALGDRLKDVLGKREVVGAMGKRVRT.

Residues 1–13 constitute a mitochondrion transit peptide; sequence MPPNLTPRSFNRD. The Q motif motif lies at 43–73; it reads RTFDDFGLEEGLVKSLKGLYGEDGKTTPIET. In terms of domain architecture, Helicase ATP-binding spans 85 to 293; it reads ASAPIGSQRV…TTNPFFTKKE (209 aa). Residue 98 to 105 participates in ATP binding; sequence AETGSGKT. A DEAD box motif is present at residues 242–245; sequence DEAD. The region spanning 334-551 is the Helicase C-terminal domain; that stretch reads TLAEDAKAAK…VGAMGKRVRT (218 aa). A disordered region spans residues 504–527; it reads LGEGAKNNKGGKGQGPLKKDGKTA.

This sequence belongs to the DEAD box helicase family. MRH4 subfamily.

It localises to the mitochondrion. It catalyses the reaction ATP + H2O = ADP + phosphate + H(+). Functionally, ATP-binding RNA helicase involved in mitochondrial RNA metabolism. Required for maintenance of mitochondrial DNA. This Cryptococcus neoformans var. neoformans serotype D (strain B-3501A) (Filobasidiella neoformans) protein is ATP-dependent RNA helicase MRH4, mitochondrial (MRH4).